The primary structure comprises 107 residues: L-rhamnose mutarotase (107 aa).

Residue Tyr18 participates in substrate binding. The active-site Proton donor is the His22. Substrate contacts are provided by residues Tyr41 and 76–77 (WW).

This sequence belongs to the rhamnose mutarotase family. In terms of assembly, homodimer.

It is found in the cytoplasm. It catalyses the reaction alpha-L-rhamnose = beta-L-rhamnose. Its pathway is carbohydrate metabolism; L-rhamnose metabolism. In terms of biological role, involved in the anomeric conversion of L-rhamnose. This Paraburkholderia xenovorans (strain LB400) protein is L-rhamnose mutarotase.